The chain runs to 63 residues: Large ribosomal subunit protein uL29 (63 aa).

This sequence belongs to the universal ribosomal protein uL29 family.

The chain is Large ribosomal subunit protein uL29 from Edwardsiella ictaluri (strain 93-146).